The primary structure comprises 301 residues: GTPase Era (301 aa).

In terms of domain architecture, Era-type G spans 7–175 (YCGFIAIVGR…AAIVRKHLPE (169 aa)). The segment at 15–22 (GRPNVGKS) is G1. 15-22 (GRPNVGKS) provides a ligand contact to GTP. A G2 region spans residues 41–45 (QTTRH). The segment at 62 to 65 (DTPG) is G3. GTP contacts are provided by residues 62 to 66 (DTPGL) and 124 to 127 (NKVD). The segment at 124–127 (NKVD) is G4. The tract at residues 154-156 (ISA) is G5. The KH type-2 domain occupies 206 to 283 (LGAELPYSVT…HLELWVKVKS (78 aa)).

The protein belongs to the TRAFAC class TrmE-Era-EngA-EngB-Septin-like GTPase superfamily. Era GTPase family. As to quaternary structure, monomer.

It localises to the cytoplasm. It is found in the cell inner membrane. An essential GTPase that binds both GDP and GTP, with rapid nucleotide exchange. Plays a role in 16S rRNA processing and 30S ribosomal subunit biogenesis and possibly also in cell cycle regulation and energy metabolism. The polypeptide is GTPase Era (Escherichia fergusonii (strain ATCC 35469 / DSM 13698 / CCUG 18766 / IAM 14443 / JCM 21226 / LMG 7866 / NBRC 102419 / NCTC 12128 / CDC 0568-73)).